A 130-amino-acid chain; its full sequence is Small ribosomal subunit protein uS8 (130 aa).

This sequence belongs to the universal ribosomal protein uS8 family. As to quaternary structure, part of the 30S ribosomal subunit. Contacts proteins S5 and S12.

Its function is as follows. One of the primary rRNA binding proteins, it binds directly to 16S rRNA central domain where it helps coordinate assembly of the platform of the 30S subunit. The sequence is that of Small ribosomal subunit protein uS8 from Vibrio vulnificus (strain CMCP6).